Here is a 595-residue protein sequence, read N- to C-terminus: MTGASLALTASVVAHAYYLKNQFYPTVVYLTKSSPSMAILYIQAFVLVFLLGKFMGKVFFGQLRAAEMEHLLERSWYAVTETCLAFTVFRDDFSPRFVALFTLLLFLKCFHWLAEDRVDFMERSPNISWLFHFRILALMLLLGVLDAFFVSHAYNSLVTRGASVQLVFGFEYAILMTMILAVFIKYILHSVDLQSENPWDNKAVYMLYTELFTGFIKVLLYMAFMTIMVKVHTFPLFAIRPMYLAMRQFKKAVTDAVMSRRAIRNMNTLYPDATAEELQAMDNVCIICREEMVSGAKRLPCNHIFHTSCLRSWFQRQQTCPTCRMDVLRASLPTQPQTPAEQQNQHQAQQQPTPVVPPQPNFPPGMLPPFPPGMFPLWPPMGQFPPVPGAPVGNPPDEANPGSSSGSSARAGETSNVGSESHPGAALPGFPFPPPFLGMSILPPFGLPPMPMPPAGFAGLTDEELRAMEGHERQNLEARLQCLQNIHTLLDAAMLQINQYLTVLASIGPPQPPVSSSSSSSASASTEPTTSSVSEPVIDTSSIVTTDSSQQSASPVPVNVETLGGAEGGETPTEEPDNVELRRRRLQKLETTDSQ.

Residues 1–19 form a helical membrane-spanning segment; the sequence is MTGASLALTASVVAHAYYL. The Lumenal portion of the chain corresponds to 20–35; it reads KNQFYPTVVYLTKSSP. The helical transmembrane segment at 36-56 threads the bilayer; that stretch reads SMAILYIQAFVLVFLLGKFMG. Residues 57 to 92 lie on the Cytoplasmic side of the membrane; it reads KVFFGQLRAAEMEHLLERSWYAVTETCLAFTVFRDD. Residues 93-113 traverse the membrane as a helical segment; that stretch reads FSPRFVALFTLLLFLKCFHWL. Over 114–129 the chain is Lumenal; sequence AEDRVDFMERSPNISW. Residues 130–150 form a helical membrane-spanning segment; sequence LFHFRILALMLLLGVLDAFFV. The Cytoplasmic portion of the chain corresponds to 151–163; it reads SHAYNSLVTRGAS. A helical transmembrane segment spans residues 164–184; it reads VQLVFGFEYAILMTMILAVFI. Over 185-218 the chain is Lumenal; sequence KYILHSVDLQSENPWDNKAVYMLYTELFTGFIKV. The helical transmembrane segment at 219–239 threads the bilayer; sequence LLYMAFMTIMVKVHTFPLFAI. Positions 230-264 are interaction with p53/TP53; sequence KVHTFPLFAIRPMYLAMRQFKKAVTDAVMSRRAIR. Residues 240–595 lie on the Cytoplasmic side of the membrane; that stretch reads RPMYLAMRQF…LQKLETTDSQ (356 aa). Cys-285, Cys-288, Cys-301, His-303, His-306, Cys-309, Cys-320, and Cys-323 together coordinate Zn(2+). The RING-type; atypical zinc finger occupies 285–324; sequence CIICREEMVSGAKRLPCNHIFHTSCLRSWFQRQQTCPTCR. Residues 335 to 353 are compositionally biased toward low complexity; that stretch reads QPQTPAEQQNQHQAQQQPT. Disordered regions lie at residues 335–370 and 386–426; these read QPQTPAEQQNQHQAQQQPTPVVPPQPNFPPGMLPPF and PVPG…PGAA. A compositionally biased stretch (pro residues) spans 354 to 370; that stretch reads PVVPPQPNFPPGMLPPF. Residues 390 to 408 show a composition bias toward low complexity; sequence APVGNPPDEANPGSSSGSS. Residues 463 to 494 adopt a coiled-coil conformation; sequence EELRAMEGHERQNLEARLQCLQNIHTLLDAAM. The disordered stretch occupies residues 509-595; it reads PPQPPVSSSS…LQKLETTDSQ (87 aa). The span at 514-552 shows a compositional bias: low complexity; that stretch reads VSSSSSSSASASTEPTTSSVSEPVIDTSSIVTTDSSQQS.

It belongs to the HRD1 family. In terms of assembly, homodimer.

It is found in the endoplasmic reticulum membrane. It catalyses the reaction S-ubiquitinyl-[E2 ubiquitin-conjugating enzyme]-L-cysteine + [acceptor protein]-L-lysine = [E2 ubiquitin-conjugating enzyme]-L-cysteine + N(6)-ubiquitinyl-[acceptor protein]-L-lysine.. It functions in the pathway protein modification; protein ubiquitination. E3 ubiquitin-protein ligase which accepts ubiquitin specifically from endoplasmic reticulum-associated UBC7 E2 ligase and transfers it to substrates, promoting their degradation. Component of the endoplasmic reticulum quality control (ERQC) system also called ER-associated degradation (ERAD) involved in ubiquitin-dependent degradation of misfolded endoplasmic reticulum proteins. Also promotes the degradation of normal but naturally short-lived proteins. Protects cells from ER stress-induced apoptosis. Sequesters p53 in the cytoplasm and promotes its degradation, thereby negatively regulating its biological function in transcription, cell cycle regulation and apoptosis. In Xenopus laevis (African clawed frog), this protein is E3 ubiquitin-protein ligase synoviolin B (syvn1-b).